Consider the following 1235-residue polypeptide: DNA polymerase catalytic subunit (1235 aa).

2 disordered regions span residues 640–693 (QGRF…AGRH) and 1098–1134 (AAAP…ASKP). A compositionally biased stretch (basic and acidic residues) spans 650–661 (APKRPAAAREDE). Residues 662-675 (ERPEEEGEDEDERE) show a composition bias toward acidic residues. The span at 676–691 (EGGGEREPEGARETAG) shows a compositional bias: basic and acidic residues.

It belongs to the DNA polymerase type-B family. Forms a complex with the ssDNA-binding protein UL29, the DNA polymerase processivity factor, and the alkaline exonuclease. Interacts with the putative helicase-primase complex subunit UL8; this interaction may coordinate leading and lagging strand DNA synthesis at the replication fork.

Its subcellular location is the host nucleus. The enzyme catalyses DNA(n) + a 2'-deoxyribonucleoside 5'-triphosphate = DNA(n+1) + diphosphate. It carries out the reaction Endonucleolytic cleavage to 5'-phosphomonoester.. In terms of biological role, replicates viral genomic DNA. The replication complex is composed of six viral proteins: the DNA polymerase, processivity factor, primase, primase-associated factor, helicase, and ssDNA-binding protein. Additionally, the polymerase contains an intrinsic ribonuclease H (RNase H) activity that specifically degrades RNA/DNA heteroduplexes or duplex DNA substrates in the 5' to 3' direction. Therefore, it can catalyze the excision of the RNA primers that initiate the synthesis of Okazaki fragments at a replication fork during viral DNA replication. This is DNA polymerase catalytic subunit from Human herpesvirus 1 (strain KOS) (HHV-1).